We begin with the raw amino-acid sequence, 255 residues long: NAD kinase (255 aa).

The active-site Proton acceptor is the D44. Residues 44–45, H49, 114–115, D144, A152, 155–160, and Q216 contribute to the NAD(+) site; these read DG, NE, and SAYNLS.

Belongs to the NAD kinase family. A divalent metal cation is required as a cofactor.

The protein resides in the cytoplasm. It carries out the reaction NAD(+) + ATP = ADP + NADP(+) + H(+). Involved in the regulation of the intracellular balance of NAD and NADP, and is a key enzyme in the biosynthesis of NADP. Catalyzes specifically the phosphorylation on 2'-hydroxyl of the adenosine moiety of NAD to yield NADP. The sequence is that of NAD kinase from Rickettsia conorii (strain ATCC VR-613 / Malish 7).